The chain runs to 2768 residues: Thyroglobulin (2768 aa).

Residues 1 to 19 (MALVLEIFTLLASICWVSA) form the signal peptide. Tyr-24 bears the Iodotyrosine; alternate mark. Tyr-24 is modified (sulfotyrosine; alternate). Tyr-24 is subject to Thyroxine; alternate. Position 24 is a triiodothyronine; alternate (Tyr-24). 4 Thyroglobulin type-1 domains span residues 31 to 92 (LRPC…PVAC), 93 to 160 (LSFC…PKRC), 161 to 297 (PRSC…RFRC), and 298 to 358 (PTKC…PPSC). 18 disulfide bridges follow: Cys-34–Cys-52, Cys-63–Cys-70, Cys-72–Cys-92, Cys-96–Cys-120, Cys-131–Cys-138, Cys-140–Cys-160, Cys-164–Cys-183, Cys-194–Cys-235, Cys-237–Cys-297, Cys-301–Cys-319, Cys-330–Cys-336, Cys-338–Cys-358, Cys-364–Cys-620, Cys-408–Cys-608, Cys-631–Cys-636, Cys-638–Cys-658, Cys-662–Cys-687, and Cys-698–Cys-703. Asn-76 carries an N-linked (GlcNAc...) asparagine glycan. Tyr-108 carries the iodotyrosine modification. Asn-110 carries an N-linked (GlcNAc...) asparagine glycan. Tyr-149 carries the post-translational modification Iodotyrosine; alternate. Tyr-149 is subject to Diiodotyrosine; alternate. Asn-198 is a glycosylation site (N-linked (GlcNAc...) asparagine). Tyr-234 and Tyr-258 each carry iodotyrosine. Residues Asn-484 and Asn-529 are each glycosylated (N-linked (GlcNAc...) asparagine). Residues 521 to 545 (PLSVGLDSNSSTGTPEAAKKDGTMN) are disordered. Thyroglobulin type-1 domains lie at 605–658 (SQTC…QPRC), 659–726 (PTDC…PKKC), 727–921 (PTPC…LPTC), 922–1073 (PGSC…IPQC), 1074–1145 (PTTC…SAQC), and 1146–1210 (PSLC…QPAC). Tyr-704 is modified (iodotyrosine; alternate). Tyr-704 bears the Thyroxine; alternate mark. Tyr-704 is subject to Triiodothyronine; alternate. At Tyr-704 the chain carries Diiodotyrosine; alternate. Intrachain disulfides connect Cys-705–Cys-726, Cys-730–Cys-763, Cys-774–Cys-898, Cys-900–Cys-921, Cys-925–Cys-1031, Cys-1042–Cys-1049, Cys-1051–Cys-1073, Cys-1077–Cys-1108, Cys-1126–Cys-1145, Cys-1149–Cys-1169, Cys-1181–Cys-1188, Cys-1190–Cys-1210, Cys-1215–Cys-1264, Cys-1231–Cys-1245, Cys-1306–Cys-1356, and Cys-1331–Cys-1347. The N-linked (GlcNAc...) asparagine glycan is linked to Asn-748. Tyr-785 carries the iodotyrosine modification. Asn-816 carries N-linked (GlcNAc...) asparagine glycosylation. Tyr-866 carries the post-translational modification Iodotyrosine; alternate. Tyr-866 bears the Diiodotyrosine; alternate mark. Tyr-883 bears the Diiodotyrosine mark. An N-linked (GlcNAc...) asparagine glycan is attached at Asn-947. Tyr-992 is subject to Iodotyrosine; alternate. Residue Tyr-992 is modified to Diiodotyrosine; alternate. Residue Asn-1220 is glycosylated (N-linked (GlcNAc...) asparagine). Tyr-1310 is modified (iodotyrosine). A Thyroxine modification is found at Tyr-1310. Residues Asn-1348, Asn-1349, and Asn-1365 are each glycosylated (N-linked (GlcNAc...) asparagine). 9 cysteine pairs are disulfide-bonded: Cys-1440-Cys-1459, Cys-1462-Cys-1473, Cys-1476-Cys-1490, Cys-1493-Cys-1510, Cys-1514-Cys-1523, Cys-1543-Cys-1565, Cys-1603-Cys-1627, Cys-1607-Cys-1613, and Cys-1639-Cys-1662. Type II repeat units lie at residues 1456–1469 (GLGC…SYSQ), 1470–1486 (DEEC…EQAG), and 1487–1503 (SLAC…ISAG). Tyr-1467 carries the post-translational modification Iodotyrosine; alternate. Diiodotyrosine; alternate is present on Tyr-1467. In terms of domain architecture, Thyroglobulin type-1 11 spans 1511–1565 (VTDCQRNEAGLQCDQNGQYRASQKDRGSGKAFCVDGEGRRLPWWETEAPLEDSQC). The Type IIIA repeat unit spans residues 1603–1723 (CLTDCTEDEA…GANLTDAHLF (121 aa)). Asn-1716 is a glycosylation site (N-linked (GlcNAc...) asparagine). 4 disulfide bridges follow: Cys-1724–Cys-1749, Cys-1728–Cys-1734, Cys-1733–Cys-1835, and Cys-1760–Cys-1777. Residues 1724–1892 (CLLACDRDLC…LFSAQQANLW (169 aa)) form a Type IIIB repeat. N-linked (GlcNAc...) asparagine glycosylation is found at Asn-1774 and Asn-1869. 7 disulfide bridges follow: Cys-1893/Cys-1919, Cys-1897/Cys-1904, Cys-1928/Cys-1939, Cys-1996/Cys-2024, Cys-2000/Cys-2006, Cys-2005/Cys-2076, and Cys-2035/Cys-2048. A Type IIIA repeat occupies 1893 to 1995 (CLSRCVQEHS…EKSISNGFFE (103 aa)). Residues 1996 to 2129 (CERRCDADPC…TSNFSAVRDL (134 aa)) form a Type IIIB repeat. The N-linked (GlcNAc...) asparagine glycan is linked to Asn-2013. Asn-2122 is a glycosylation site (N-linked (GlcNAc...) asparagine). 3 disulfides stabilise this stretch: Cys-2130–Cys-2154, Cys-2134–Cys-2140, and Cys-2163–Cys-2172. The stretch at 2130-2187 (CLSECSQHEACLITTLQTQPGAVRCMFYADTQSCTHSLQGQNCRLLLREEATHIYRKP) is one Type IIIA repeat. An Iodotyrosine modification is found at Tyr-2184. The interval 2188-2768 (GISLLSYEAS…QEPGSKTYSK (581 aa)) is cholinesterase-like (ChEL). A glycan (N-linked (GlcNAc...) asparagine) is linked at Asn-2250. Cys-2264 and Cys-2281 are disulfide-bonded. A glycan (N-linked (GlcNAc...) asparagine) is linked at Asn-2295. Cys-2442 and Cys-2453 are oxidised to a cystine. Tyr-2540 is modified (iodotyrosine). Position 2573 is an iodotyrosine; alternate (Tyr-2573). Tyr-2573 bears the Thyroxine; alternate mark. At Tyr-2573 the chain carries Triiodothyronine; alternate. Diiodotyrosine; alternate is present on Tyr-2573. N-linked (GlcNAc...) asparagine glycosylation occurs at Asn-2582. An iodotyrosine mark is found at Tyr-2587 and Tyr-2617. Cys-2591 and Cys-2715 are joined by a disulfide. Tyr-2697 bears the Diiodotyrosine mark. Positions 2727 to 2768 (TSADGAKGGQSAESEEEELTAGSGLREDLLSLQEPGSKTYSK) are disordered. An O-linked (Xyl...) (chondroitin sulfate) serine glycan is attached at Ser-2749. Residue Tyr-2766 is modified to Iodotyrosine; alternate. A Thyroxine; alternate modification is found at Tyr-2766. At Tyr-2766 the chain carries Triiodothyronine; alternate. Diiodotyrosine; alternate is present on Tyr-2766.

It belongs to the type-B carboxylesterase/lipase family. Monomer. Homodimer (via ChEL region); occurs in the endoplasmic reticulum and is required for export to the Golgi apparatus. Homooligomer; disulfide-linked; stored in this form in the thyroid follicle lumen. Post-translationally, iodinated on tyrosine residues by TPO. There are 4 pairs of iodinated tyrosines used for coupling: acceptor Tyr-24 is coupled to donor Tyr-149 or Tyr-234, acceptor Tyr-2573 is coupled to donor Tyr-2540, acceptor Tyr-2766 in monomer 1 is coupled to donor Tyr-2766 in monomer 2 and acceptor Tyr-1310 in monomer 1 is coupled to donor Tyr-108 in monomer 2. In terms of processing, sulfated tyrosines are desulfated during iodination. Undergoes sequential proteolysis by cathepsins to release thyroxine (T4) and triiodothyronine (T3) hormones. In the thyroid follicle lumen, cross-linked TG (storage form) is solubilized by limited proteolysis mediated by cathepsins CTSB and/or CTSL. Partially cleaved TG is further processed by CTSK/cathepsin K and/or CTSL resulting in the release of T4. Following endocytosis, further processing occurs leading to the release of T3 and more T4 hormones. In terms of tissue distribution, specifically expressed in the thyroid gland.

It localises to the secreted. Acts as a substrate for the production of iodinated thyroid hormones thyroxine (T4) and triiodothyronine (T3). The synthesis of T3 and T4 involves iodination of selected tyrosine residues of TG/thyroglobulin followed by their oxidative coupling in the thyroid follicle lumen. Following TG re-internalization and lysosomal-mediated proteolysis, T3 and T4 are released from the polypeptide backbone leading to their secretion into the bloodstream. One dimer produces 7 thyroid hormone molecules. This chain is Thyroglobulin, found in Homo sapiens (Human).